We begin with the raw amino-acid sequence, 385 residues long: 8-amino-7-oxononanoate synthase (385 aa).

Position 21 (Arg21) interacts with substrate. 108-109 (GF) contributes to the pyridoxal 5'-phosphate binding site. His133 lines the substrate pocket. 3 residues coordinate pyridoxal 5'-phosphate: Ser179, His207, and Thr233. Lys236 carries the N6-(pyridoxal phosphate)lysine modification. Thr352 is a binding site for substrate.

Belongs to the class-II pyridoxal-phosphate-dependent aminotransferase family. BioF subfamily. Homodimer. The cofactor is pyridoxal 5'-phosphate.

The catalysed reaction is 6-carboxyhexanoyl-[ACP] + L-alanine + H(+) = (8S)-8-amino-7-oxononanoate + holo-[ACP] + CO2. Its pathway is cofactor biosynthesis; biotin biosynthesis. In terms of biological role, catalyzes the decarboxylative condensation of pimeloyl-[acyl-carrier protein] and L-alanine to produce 8-amino-7-oxononanoate (AON), [acyl-carrier protein], and carbon dioxide. This is 8-amino-7-oxononanoate synthase from Salmonella arizonae (strain ATCC BAA-731 / CDC346-86 / RSK2980).